A 294-amino-acid chain; its full sequence is Nucleotide-binding protein LVIS_0651 (294 aa).

12-19 (GMSGAGKT) serves as a coordination point for ATP. Residue 62 to 65 (DLRS) coordinates GTP.

It belongs to the RapZ-like family.

In terms of biological role, displays ATPase and GTPase activities. The sequence is that of Nucleotide-binding protein LVIS_0651 from Levilactobacillus brevis (strain ATCC 367 / BCRC 12310 / CIP 105137 / JCM 1170 / LMG 11437 / NCIMB 947 / NCTC 947) (Lactobacillus brevis).